The chain runs to 365 residues: WAT1-related protein At4g01430 (365 aa).

The next 10 membrane-spanning stretches (helical) occupy residues 7 to 27, 39 to 59, 76 to 96, 100 to 120, 132 to 152, 183 to 203, 216 to 236, 250 to 270, 280 to 300, and 305 to 325; these read WAPV…NALV, IFGA…SYIW, FISG…GLSY, TVSM…ALIF, AGVL…LLTF, WLLG…WMLF, YSST…LSLY, FVIL…TVVT, VFVS…DFLI, and LYLG…VFLW. The EamA 1 domain occupies 20–151; it reads MGSVNALVKK…ICIMGAMLLT (132 aa). An EamA 2 domain is found at 216 to 324; it reads YSSTCLMSVF…VTITGLYVFL (109 aa). The segment at 339-365 is disordered; sequence LNSSQFSQNKDNEDHTIANHKDTNLPV. The span at 348–365 shows a compositional bias: basic and acidic residues; it reads KDNEDHTIANHKDTNLPV.

It belongs to the drug/metabolite transporter (DMT) superfamily. Plant drug/metabolite exporter (P-DME) (TC 2.A.7.4) family.

The protein localises to the membrane. The protein is WAT1-related protein At4g01430 of Arabidopsis thaliana (Mouse-ear cress).